The primary structure comprises 390 residues: 2-oxoisovalerate dehydrogenase subunit beta, mitochondrial (390 aa).

A mitochondrion-targeting transit peptide spans 1-48 (MAAVAARAGGLLRLGAAGAERRRRGLRCAALVQGFLQPAVDDASQKRR). Tyr-150 is a thiamine diphosphate binding site. Residues Gly-176, Leu-178, Thr-179, Cys-226, and Asp-229 each coordinate K(+). Lys-230 bears the N6-acetyllysine mark. Asn-231 contacts K(+). Position 239 is an N6-acetyllysine (Lys-239).

In terms of assembly, heterotetramer of 2 alpha/BCKDHA and 2 beta chains/BCKDHB that forms the branched-chain alpha-keto acid decarboxylase (E1) component of the BCKD complex. The branched-chain alpha-ketoacid dehydrogenase is a large complex composed of three major building blocks E1, E2 and E3. It is organized around E2, a 24-meric cubic core composed of DBT, to which are associated 6 to 12 copies of E1, and approximately 6 copies of the dehydrogenase E3, a DLD dimer. Thiamine diphosphate serves as cofactor.

Its subcellular location is the mitochondrion matrix. The catalysed reaction is N(6)-[(R)-lipoyl]-L-lysyl-[protein] + 3-methyl-2-oxobutanoate + H(+) = N(6)-[(R)-S(8)-2-methylpropanoyldihydrolipoyl]-L-lysyl-[protein] + CO2. In terms of biological role, together with BCKDHA forms the heterotetrameric E1 subunit of the mitochondrial branched-chain alpha-ketoacid dehydrogenase (BCKD) complex. The BCKD complex catalyzes the multi-step oxidative decarboxylation of alpha-ketoacids derived from the branched-chain amino-acids valine, leucine and isoleucine producing CO2 and acyl-CoA which is subsequently utilized to produce energy. The E1 subunit catalyzes the first step with the decarboxylation of the alpha-ketoacid forming an enzyme-product intermediate. A reductive acylation mediated by the lipoylamide cofactor of E2 extracts the acyl group from the E1 active site for the next step of the reaction. The sequence is that of 2-oxoisovalerate dehydrogenase subunit beta, mitochondrial from Rattus norvegicus (Rat).